The following is a 21-amino-acid chain: Neuropeptide gamma (21 aa).

Positions 1–21 are disordered; sequence SSANPQITRKRHKINSFVGLM. Methionine 21 is subject to Methionine amide.

This sequence belongs to the tachykinin family.

It is found in the secreted. In terms of biological role, tachykinins are active peptides which excite neurons, evoke behavioral responses, and contract (directly or indirectly) many smooth muscles. Is a potent vasoconstrictor and secretagogue that plays a regulatory role in the central control of ventilation, in particular, the heart rate variability (HRV). This Oncorhynchus mykiss (Rainbow trout) protein is Neuropeptide gamma.